Here is a 727-residue protein sequence, read N- to C-terminus: Catalase-peroxidase (727 aa).

Positions 1–26 (MSDEKKCPVTGRTSSQVAGSGTSNKD) are disordered. Positions 11–26 (GRTSSQVAGSGTSNKD) are enriched in polar residues. Positions 96 to 219 (WHSAGTYRIG…LAAVQMGLIY (124 aa)) form a cross-link, tryptophyl-tyrosyl-methioninium (Trp-Tyr) (with M-245). The Proton acceptor role is filled by histidine 97. The tryptophyl-tyrosyl-methioninium (Tyr-Met) (with W-96) cross-link spans 219–245 (YVNPEGPNGDPNAVASGKDVRETFARM). Heme b is bound at residue histidine 260. The span at 346-362 (SDPEAKKAVPDAHDPSK) shows a compositional bias: basic and acidic residues. The tract at residues 346–365 (SDPEAKKAVPDAHDPSKTHP) is disordered.

This sequence belongs to the peroxidase family. Peroxidase/catalase subfamily. Homodimer or homotetramer. The cofactor is heme b. Post-translationally, formation of the three residue Trp-Tyr-Met cross-link is important for the catalase, but not the peroxidase activity of the enzyme.

The catalysed reaction is H2O2 + AH2 = A + 2 H2O. It catalyses the reaction 2 H2O2 = O2 + 2 H2O. Its function is as follows. Bifunctional enzyme with both catalase and broad-spectrum peroxidase activity. This Maridesulfovibrio salexigens (strain ATCC 14822 / DSM 2638 / NCIMB 8403 / VKM B-1763) (Desulfovibrio salexigens) protein is Catalase-peroxidase.